The primary structure comprises 266 residues: MATKILSLLALLALFASATNASIIPQCSLAPSSIIPQFLPPVTSMAFEHPAVQAYRLQQAIAASVLQQPIAQLQQQSLAHLTIQTIATQQQQQFLPALSHLAMVNPIAYLQQQLLASNPLGLANVVANQQQQQLQQFLPALSQLAMVNPAAYLQQQQLLSSSPLAVANAPTYLQQELLQQIVPALTQLAVANPVAYLQQLLPFNQLTMSNSVAYLQQRQQLLNPLAVANPLVAAFLQQQQLLPYNRFSLMNPVLSRQQPIVGGAIF.

The signal sequence occupies residues 1-21 (MATKILSLLALLALFASATNA).

This sequence belongs to the zein family.

In terms of biological role, zeins are major seed storage proteins. This Zea mays (Maize) protein is 22 kDa alpha-zein 14.